The sequence spans 254 residues: Imidazole glycerol phosphate synthase subunit HisF (254 aa).

Residues Asp13 and Asp132 contribute to the active site.

The protein belongs to the HisA/HisF family. In terms of assembly, heterodimer of HisH and HisF.

The protein resides in the cytoplasm. It carries out the reaction 5-[(5-phospho-1-deoxy-D-ribulos-1-ylimino)methylamino]-1-(5-phospho-beta-D-ribosyl)imidazole-4-carboxamide + L-glutamine = D-erythro-1-(imidazol-4-yl)glycerol 3-phosphate + 5-amino-1-(5-phospho-beta-D-ribosyl)imidazole-4-carboxamide + L-glutamate + H(+). Its pathway is amino-acid biosynthesis; L-histidine biosynthesis; L-histidine from 5-phospho-alpha-D-ribose 1-diphosphate: step 5/9. Its function is as follows. IGPS catalyzes the conversion of PRFAR and glutamine to IGP, AICAR and glutamate. The HisF subunit catalyzes the cyclization activity that produces IGP and AICAR from PRFAR using the ammonia provided by the HisH subunit. The protein is Imidazole glycerol phosphate synthase subunit HisF of Wolinella succinogenes (strain ATCC 29543 / DSM 1740 / CCUG 13145 / JCM 31913 / LMG 7466 / NCTC 11488 / FDC 602W) (Vibrio succinogenes).